The primary structure comprises 181 residues: Isopentenyl-diphosphate Delta-isomerase (181 aa).

Histidine 24 and histidine 30 together coordinate Mn(2+). Residues 28-168 (LLHLAFSVLL…PDTFSVWFPT (141 aa)) form the Nudix hydrolase domain. Cysteine 68 is a catalytic residue. Cysteine 68 is a binding site for Mg(2+). Histidine 70 lines the Mn(2+) pocket. Glutamate 88 serves as a coordination point for Mg(2+). Positions 117 and 119 each coordinate Mn(2+). The active site involves glutamate 119.

It belongs to the IPP isomerase type 1 family. Mg(2+) is required as a cofactor. Mn(2+) serves as cofactor.

The protein localises to the cytoplasm. The catalysed reaction is isopentenyl diphosphate = dimethylallyl diphosphate. The protein operates within isoprenoid biosynthesis; dimethylallyl diphosphate biosynthesis; dimethylallyl diphosphate from isopentenyl diphosphate: step 1/1. Its function is as follows. Catalyzes the 1,3-allylic rearrangement of the homoallylic substrate isopentenyl (IPP) to its highly electrophilic allylic isomer, dimethylallyl diphosphate (DMAPP). The protein is Isopentenyl-diphosphate Delta-isomerase of Aliivibrio fischeri (strain ATCC 700601 / ES114) (Vibrio fischeri).